A 663-amino-acid polypeptide reads, in one-letter code: Endopolyphosphatase (663 aa).

The Cytoplasmic portion of the chain corresponds to 1 to 14; the sequence is MAVNEKDVGRKSRV. The chain crosses the membrane as a helical; Signal-anchor for type II membrane protein span at residues 15–35; sequence SVVLWVFIALGTLFLCKNAFT. Topologically, residues 36–663 are vacuolar; sequence FSSESIHGLK…ISTGYEDERN (628 aa). Residues asparagine 487 and asparagine 526 are each glycosylated (N-linked (GlcNAc...) asparagine). Residues 534 to 564 are disordered; the sequence is SAEQNKKKKKKNGKPDKSIPRKKPDELPAGP. The segment covering 546 to 559 has biased composition (basic and acidic residues); the sequence is GKPDKSIPRKKPDE.

Belongs to the endopolyphosphatase PPN1 family. It depends on a divalent metal cation as a cofactor. In terms of processing, processing by proteases in the vacuole may be required for activation.

It is found in the vacuole membrane. The enzyme catalyses [phosphate](n+1) + n H2O = (n+1) phosphate + n H(+). In terms of biological role, catalyzes the hydrolysis of inorganic polyphosphate (polyP) chains of many hundreds of phosphate residues into shorter lengths. This is Endopolyphosphatase (PPN1) from Candida glabrata (strain ATCC 2001 / BCRC 20586 / JCM 3761 / NBRC 0622 / NRRL Y-65 / CBS 138) (Yeast).